The following is a 40-amino-acid chain: Photosystem II reaction center protein J (40 aa).

Residues 8–28 traverse the membrane as a helical segment; that stretch reads IPLWIIGTGAGILVIGLIGIF.

It belongs to the PsbJ family. As to quaternary structure, PSII is composed of 1 copy each of membrane proteins PsbA, PsbB, PsbC, PsbD, PsbE, PsbF, PsbH, PsbI, PsbJ, PsbK, PsbL, PsbM, PsbT, PsbX, PsbY, PsbZ, Psb30/Ycf12, at least 3 peripheral proteins of the oxygen-evolving complex and a large number of cofactors. It forms dimeric complexes.

It localises to the plastid. Its subcellular location is the chloroplast thylakoid membrane. In terms of biological role, one of the components of the core complex of photosystem II (PSII). PSII is a light-driven water:plastoquinone oxidoreductase that uses light energy to abstract electrons from H(2)O, generating O(2) and a proton gradient subsequently used for ATP formation. It consists of a core antenna complex that captures photons, and an electron transfer chain that converts photonic excitation into a charge separation. In Aethionema grandiflorum (Persian stone-cress), this protein is Photosystem II reaction center protein J.